The sequence spans 361 residues: RNA 3'-terminal phosphate cyclase (361 aa).

Residues Q109 and 293–297 each bind ATP; that span reads HLADQ. Catalysis depends on H319, which acts as the Tele-AMP-histidine intermediate.

Belongs to the RNA 3'-terminal cyclase family. Type 1 subfamily.

Its subcellular location is the cytoplasm. It carries out the reaction a 3'-end 3'-phospho-ribonucleotide-RNA + ATP = a 3'-end 2',3'-cyclophospho-ribonucleotide-RNA + AMP + diphosphate. Catalyzes the conversion of 3'-phosphate to a 2',3'-cyclic phosphodiester at the end of RNA. The mechanism of action of the enzyme occurs in 3 steps: (A) adenylation of the enzyme by ATP; (B) transfer of adenylate to an RNA-N3'P to produce RNA-N3'PP5'A; (C) and attack of the adjacent 2'-hydroxyl on the 3'-phosphorus in the diester linkage to produce the cyclic end product. The biological role of this enzyme is unknown but it is likely to function in some aspects of cellular RNA processing. This chain is RNA 3'-terminal phosphate cyclase, found in Methylococcus capsulatus (strain ATCC 33009 / NCIMB 11132 / Bath).